A 340-amino-acid polypeptide reads, in one-letter code: Dihydroorotate dehydrogenase (quinone) (340 aa).

FMN contacts are provided by residues 61–65 (AGLDK) and T85. K65 provides a ligand contact to substrate. Substrate is bound at residue 110 to 114 (NRMGF). Positions 138 and 171 each coordinate FMN. Position 171 (N171) interacts with substrate. S174 serves as the catalytic Nucleophile. N176 is a substrate binding site. Residues K216 and T244 each coordinate FMN. 245 to 246 (NT) contacts substrate. FMN contacts are provided by residues G267, G296, and 317 to 318 (YS).

The protein belongs to the dihydroorotate dehydrogenase family. Type 2 subfamily. In terms of assembly, monomer. FMN is required as a cofactor.

It is found in the cell membrane. It carries out the reaction (S)-dihydroorotate + a quinone = orotate + a quinol. The protein operates within pyrimidine metabolism; UMP biosynthesis via de novo pathway; orotate from (S)-dihydroorotate (quinone route): step 1/1. Catalyzes the conversion of dihydroorotate to orotate with quinone as electron acceptor. The chain is Dihydroorotate dehydrogenase (quinone) from Ectopseudomonas mendocina (strain ymp) (Pseudomonas mendocina).